The following is a 147-amino-acid chain: Large ribosomal subunit protein uL13 (147 aa).

It belongs to the universal ribosomal protein uL13 family. As to quaternary structure, part of the 50S ribosomal subunit.

In terms of biological role, this protein is one of the early assembly proteins of the 50S ribosomal subunit, although it is not seen to bind rRNA by itself. It is important during the early stages of 50S assembly. This chain is Large ribosomal subunit protein uL13, found in Renibacterium salmoninarum (strain ATCC 33209 / DSM 20767 / JCM 11484 / NBRC 15589 / NCIMB 2235).